The primary structure comprises 181 residues: MKSIAVTGYKNFELGIFKKDADEAVYIKETIKRHLLPLVEDGLEWVIISGQLGIELWAGDVVAELKADYPIKLAILEPFEKQSANWNEANQLWASEVLEKADYHAFITKRPYESPAQFAARDGFIIDNTDGALLVYDLEKEGSPKFFYDRATQAKEQSNYYIDCIDFYALQEVVEDMNQTF.

This sequence belongs to the UPF0398 family.

The sequence is that of UPF0398 protein lmo1889 from Listeria monocytogenes serovar 1/2a (strain ATCC BAA-679 / EGD-e).